The chain runs to 302 residues: RNA polymerase II holoenzyme cyclin-like subunit (302 aa).

A Cyclin N-terminal domain is found at 53–142 (QQLIKLGKRM…LGECEFSLIS (90 aa)).

The protein belongs to the cyclin family. Cyclin C subfamily. In terms of assembly, component of the srb8-11 complex, a regulatory module of the Mediator complex.

The protein localises to the nucleus. Functionally, component of the srb8-11 complex. The srb8-11 complex is a regulatory module of the Mediator complex which is itself involved in regulation of basal and activated RNA polymerase II-dependent transcription. The srb8-11 complex may be involved in the transcriptional repression of a subset of genes regulated by Mediator. It may inhibit the association of the Mediator complex with RNA polymerase II to form the holoenzyme complex. The srb8-11 complex phosphorylates the C-terminal domain (CTD) of the largest subunit of RNA polymerase II. The protein is RNA polymerase II holoenzyme cyclin-like subunit (ssn8) of Aspergillus fumigatus (strain ATCC MYA-4609 / CBS 101355 / FGSC A1100 / Af293) (Neosartorya fumigata).